Here is a 248-residue protein sequence, read N- to C-terminus: Ubiquinone/menaquinone biosynthesis C-methyltransferase UbiE (248 aa).

Residues S68 and D92 each coordinate S-adenosyl-L-methionine.

Belongs to the class I-like SAM-binding methyltransferase superfamily. MenG/UbiE family.

It catalyses the reaction a 2-demethylmenaquinol + S-adenosyl-L-methionine = a menaquinol + S-adenosyl-L-homocysteine + H(+). It carries out the reaction a 2-methoxy-6-(all-trans-polyprenyl)benzene-1,4-diol + S-adenosyl-L-methionine = a 5-methoxy-2-methyl-3-(all-trans-polyprenyl)benzene-1,4-diol + S-adenosyl-L-homocysteine + H(+). It functions in the pathway quinol/quinone metabolism; menaquinone biosynthesis; menaquinol from 1,4-dihydroxy-2-naphthoate: step 2/2. The protein operates within cofactor biosynthesis; ubiquinone biosynthesis. Functionally, methyltransferase required for the conversion of demethylmenaquinol (DMKH2) to menaquinol (MKH2) and the conversion of 2-polyprenyl-6-methoxy-1,4-benzoquinol (DDMQH2) to 2-polyprenyl-3-methyl-6-methoxy-1,4-benzoquinol (DMQH2). This Rickettsia bellii (strain OSU 85-389) protein is Ubiquinone/menaquinone biosynthesis C-methyltransferase UbiE.